A 350-amino-acid chain; its full sequence is tRNA uridine(34) hydroxylase (350 aa).

Residues 146–240 (DDPDALFIDM…YARKAREQGL (95 aa)) enclose the Rhodanese domain. Cys200 acts as the Cysteine persulfide intermediate in catalysis.

Belongs to the TrhO family.

It carries out the reaction uridine(34) in tRNA + AH2 + O2 = 5-hydroxyuridine(34) in tRNA + A + H2O. Functionally, catalyzes oxygen-dependent 5-hydroxyuridine (ho5U) modification at position 34 in tRNAs, the first step in 5-carboxymethoxyuridine (cmo5U) biosynthesis. May be part of an alternate pathway, which is able to bypass cmo5U biogenesis in a subset of tRNAs under aerobic conditions. This chain is tRNA uridine(34) hydroxylase, found in Escherichia coli O81 (strain ED1a).